Reading from the N-terminus, the 376-residue chain is MKKIILVAGGTGGHFFPAVALGEELIKRGYEVHFITDLRCKQYIKQDMKVIFHILDLKRSGNIFLFLPRLSIAVLKAIKLLYNMKPSVTVGFGGYPVIAPMFAAIFLRVPIIIHEQNSYLGKVNKFFASFAKKIAISYEKIKNLPEFAKSKIVVTGGVVRENIRELKVIEMSSRGLTTGSKKSLIKALDSVVKPRNDKLFTIFIFGGSQGAKLFSELIPASIQILMQKQPSLELNIIQQAALDDQVKIKDIYSKLNITYEFAEFFDNMALQYKEADLVISRAGASTIEELTYIGLPAIFIPLPSAADNHQYYNAQLLEDEKTGWCLEQNNISAGKLADKILDLISNPKILEDASQNLLKRRKEGHKLLSNLIEEVI.

Residues 11 to 13, Asn117, Arg160, Ser208, and Gln310 contribute to the UDP-N-acetyl-alpha-D-glucosamine site; that span reads TGG.

The protein belongs to the glycosyltransferase 28 family. MurG subfamily.

It is found in the cell inner membrane. The enzyme catalyses di-trans,octa-cis-undecaprenyl diphospho-N-acetyl-alpha-D-muramoyl-L-alanyl-D-glutamyl-meso-2,6-diaminopimeloyl-D-alanyl-D-alanine + UDP-N-acetyl-alpha-D-glucosamine = di-trans,octa-cis-undecaprenyl diphospho-[N-acetyl-alpha-D-glucosaminyl-(1-&gt;4)]-N-acetyl-alpha-D-muramoyl-L-alanyl-D-glutamyl-meso-2,6-diaminopimeloyl-D-alanyl-D-alanine + UDP + H(+). Its pathway is cell wall biogenesis; peptidoglycan biosynthesis. In terms of biological role, cell wall formation. Catalyzes the transfer of a GlcNAc subunit on undecaprenyl-pyrophosphoryl-MurNAc-pentapeptide (lipid intermediate I) to form undecaprenyl-pyrophosphoryl-MurNAc-(pentapeptide)GlcNAc (lipid intermediate II). This is UDP-N-acetylglucosamine--N-acetylmuramyl-(pentapeptide) pyrophosphoryl-undecaprenol N-acetylglucosamine transferase from Rickettsia peacockii (strain Rustic).